A 128-amino-acid chain; its full sequence is DNA-directed RNA polymerase subunit omega (128 aa).

The tract at residues 87–106 (ARSSQAAPKSAPGQEIGKSF) is disordered.

This sequence belongs to the RNA polymerase subunit omega family. As to quaternary structure, the RNAP catalytic core consists of 2 alpha, 1 beta, 1 beta' and 1 omega subunit. When a sigma factor is associated with the core the holoenzyme is formed, which can initiate transcription.

The enzyme catalyses RNA(n) + a ribonucleoside 5'-triphosphate = RNA(n+1) + diphosphate. Functionally, promotes RNA polymerase assembly. Latches the N- and C-terminal regions of the beta' subunit thereby facilitating its interaction with the beta and alpha subunits. The polypeptide is DNA-directed RNA polymerase subunit omega (Anaplasma marginale (strain Florida)).